We begin with the raw amino-acid sequence, 348 residues long: S-adenosylmethionine:tRNA ribosyltransferase-isomerase (348 aa).

Belongs to the QueA family. Monomer.

The protein resides in the cytoplasm. It carries out the reaction 7-aminomethyl-7-carbaguanosine(34) in tRNA + S-adenosyl-L-methionine = epoxyqueuosine(34) in tRNA + adenine + L-methionine + 2 H(+). It functions in the pathway tRNA modification; tRNA-queuosine biosynthesis. In terms of biological role, transfers and isomerizes the ribose moiety from AdoMet to the 7-aminomethyl group of 7-deazaguanine (preQ1-tRNA) to give epoxyqueuosine (oQ-tRNA). This Cytophaga hutchinsonii (strain ATCC 33406 / DSM 1761 / CIP 103989 / NBRC 15051 / NCIMB 9469 / D465) protein is S-adenosylmethionine:tRNA ribosyltransferase-isomerase.